Reading from the N-terminus, the 236-residue chain is Phosphoribosylaminoimidazole-succinocarboxamide synthase (236 aa).

Belongs to the SAICAR synthetase family.

The enzyme catalyses 5-amino-1-(5-phospho-D-ribosyl)imidazole-4-carboxylate + L-aspartate + ATP = (2S)-2-[5-amino-1-(5-phospho-beta-D-ribosyl)imidazole-4-carboxamido]succinate + ADP + phosphate + 2 H(+). The protein operates within purine metabolism; IMP biosynthesis via de novo pathway; 5-amino-1-(5-phospho-D-ribosyl)imidazole-4-carboxamide from 5-amino-1-(5-phospho-D-ribosyl)imidazole-4-carboxylate: step 1/2. This chain is Phosphoribosylaminoimidazole-succinocarboxamide synthase, found in Pseudomonas aeruginosa (strain LESB58).